The primary structure comprises 1349 residues: Elongator complex protein 1 (1349 aa).

Phosphoserine is present on residues Ser529, Ser539, Ser551, Ser636, and Ser828. The tract at residues 919 to 1349 is mediates dimerization; sequence QDVNVVYKSA…DFPKSHIVDF (431 aa). Residues Ser1198 and Ser1202 each carry the phosphoserine; by HRR25 modification. Ser1205 and Ser1209 each carry phosphoserine. The segment covering 1214–1228 has biased composition (low complexity); the sequence is YTGKTGGTAKTGASR. The interval 1214-1245 is disordered; it reads YTGKTGGTAKTGASRRTAKNKRREERKRARGK. The tract at residues 1228–1246 is required for binding to tRNA; that stretch reads RRTAKNKRREERKRARGKK.

It belongs to the ELP1/IKA1 family. As to quaternary structure, homodimer; dimerization promotes ELP1/IKI3 stability and elongator complex formation. Component of the elongator complex which consists of ELP1/IKI3, ELP2, ELP3, ELP4, ELP5/IKI1 and ELP6. The elongator complex is composed of two copies of the Elp123 subcomplex (composed of ELP1/IKI3, ELP2 and ELP3) and two copies of the Elp456 subcomplex (composed of ELP4, ELP5/IKI1 and ELP6). The Elp123 subcomplex forms a two-lobed scaffold, which binds the Elp456 subcomplex asymmetrically. In the complex, ELP1/IKI3 interacts with ELP2. In each lobe, ELP2 is tightly sandwiched between ELP1/IKI3 and ELP3. The Elp123 subcomplex binds tRNA through ELP1/IKI3 and ELP3 and can bind 2 tRNAs simultaneously. tRNA-binding induces conformational rearrangements which precisely position the targeted anticodon base in the active site. The Elp456 subcomplex binds tRNA and has ATPase activity. ELP1/IKI3 interacts with HRR25 and KTI12. Interacts with KTI11/DPH3. Phosphorylation promotes the tRNA modification function of the elongator complex.

The protein resides in the cytoplasm. The protein localises to the nucleus. It participates in tRNA modification; 5-methoxycarbonylmethyl-2-thiouridine-tRNA biosynthesis. Its function is as follows. Component of the elongator complex which is required for multiple tRNA modifications, including mcm5U (5-methoxycarbonylmethyl uridine), mcm5s2U (5-methoxycarbonylmethyl-2-thiouridine), and ncm5U (5-carbamoylmethyl uridine). The elongator complex catalyzes formation of carboxymethyluridine in the wobble base at position 34 in tRNAs. Functions as a gamma-toxin target (TOT); disruption of the complex confers resistance to Kluyveromyces lactis toxin zymocin (pGKL1 killer toxin). May also be involved in sensitivity to Pichia inositovora toxin. ELP1/IKI3 binds to tRNA, mediating interaction of the elongator complex with tRNA. Independently, may be involved in polarized exocytosis. This is Elongator complex protein 1 (IKI3) from Saccharomyces cerevisiae (strain ATCC 204508 / S288c) (Baker's yeast).